Here is a 229-residue protein sequence, read N- to C-terminus: MAKKSKQMRAALEKVDSTKAYSVEEAVALIKETNFAKFDASVEVAYNLNIDVRKADQQIRGAMVLPNGTGKTQRVLVFARGAKAEEAKAAGADFVGEDDLVAKINGGWLDFDVVIATPDMMAIVGRLGRVLGPRNLMPNPKTGTVTMDVAKAVEESKGGKITYRADKAGNVQAIIGKVSFDADKLVENFKAFNDVMVKSKPSTAKGTYMTNVSITSTQGVGIKVDPSSL.

Belongs to the universal ribosomal protein uL1 family. Part of the 50S ribosomal subunit.

Functionally, binds directly to 23S rRNA. The L1 stalk is quite mobile in the ribosome, and is involved in E site tRNA release. Its function is as follows. Protein L1 is also a translational repressor protein, it controls the translation of the L11 operon by binding to its mRNA. The protein is Large ribosomal subunit protein uL1 of Streptococcus uberis (strain ATCC BAA-854 / 0140J).